The sequence spans 1607 residues: Thrombospondin type-1 domain-containing protein 7B (1607 aa).

The signal sequence occupies residues 1–31; the sequence is MFLRSDLAVTHWVSRSMRKLFLVLSLLLSQA. At 32-1556 the chain is on the extracellular side; it reads AHLEGRKDNQ…QPLDPDGRVK (1525 aa). 18 TSP type-1 domains span residues 40 to 98, 102 to 177, 179 to 233, 336 to 392, 399 to 482, 484 to 543, 601 to 661, 662 to 735, 737 to 796, 797 to 869, 871 to 924, 925 to 999, 1001 to 1126, 1128 to 1182, 1183 to 1246, 1248 to 1303, 1304 to 1369, and 1371 to 1432; these read NQFL…RVCD, DLFQ…IPCP, DCVV…VSCP, DCET…IAEG, PRYS…VPCS, DCIV…PMCH, DCVV…HSCT, QLYW…LPCK, DCLV…SLCP, SYRW…IPCR, DCTF…CPCD, TFMS…IPCP, DCKL…LLCP, ECVM…ENCF, QFQY…VECV, NCQL…TPCY, SWVL…VPCP, and DCHI…GKCY. N-linked (GlcNAc...) asparagine glycans are attached at residues Asn150 and Asn219. 3 disulfides stabilise this stretch: Cys411-Cys477, Cys431-Cys481, and Cys442-Cys466. 3 disulfide bridges follow: Cys602/Cys643, Cys613/Cys617, and Cys655/Cys660. N-linked (GlcNAc...) asparagine glycosylation is present at Asn683. 3 disulfide bridges follow: Cys738-Cys779, Cys749-Cys753, and Cys789-Cys795. Asn757 carries N-linked (GlcNAc...) asparagine glycosylation. An N-linked (GlcNAc...) asparagine glycan is attached at Asn842. Residue Asn933 is glycosylated (N-linked (GlcNAc...) asparagine). 5 disulfides stabilise this stretch: Cys937/Cys994, Cys960/Cys998, Cys971/Cys984, Cys1002/Cys1039, and Cys1013/Cys1017. Asn985 carries an N-linked (GlcNAc...) asparagine glycan. Residue Asn1105 is glycosylated (N-linked (GlcNAc...) asparagine). A disulfide bridge links Cys1121 with Cys1125. Residues Asn1187 and Asn1199 are each glycosylated (N-linked (GlcNAc...) asparagine). 3 disulfides stabilise this stretch: Cys1249–Cys1287, Cys1260–Cys1264, and Cys1297–Cys1302. N-linked (GlcNAc...) asparagine glycans are attached at residues Asn1309 and Asn1335. 3 disulfides stabilise this stretch: Cys1372–Cys1416, Cys1383–Cys1387, and Cys1426–Cys1431. N-linked (GlcNAc...) asparagine glycosylation is found at Asn1457 and Asn1525. Residues 1557–1577 traverse the membrane as a helical segment; it reads MWVYGVSGGSFLIMIFLVFTS. At 1578–1607 the chain is on the cytoplasmic side; sequence YLVCKKPKPHQSTPRHQKPLTLAYDGDLDM.

The protein localises to the membrane. This chain is Thrombospondin type-1 domain-containing protein 7B, found in Mus musculus (Mouse).